Reading from the N-terminus, the 378-residue chain is Acetylornithine deacetylase (378 aa).

His-76 serves as a coordination point for Zn(2+). Asp-78 is an active-site residue. A Zn(2+)-binding site is contributed by Asp-108. Residue Glu-140 is part of the active site. Glu-141, Glu-165, and His-351 together coordinate Zn(2+).

This sequence belongs to the peptidase M20A family. ArgE subfamily. As to quaternary structure, homodimer. It depends on Zn(2+) as a cofactor. Co(2+) is required as a cofactor. The cofactor is glutathione.

The protein resides in the cytoplasm. The catalysed reaction is N(2)-acetyl-L-ornithine + H2O = L-ornithine + acetate. Its pathway is amino-acid biosynthesis; L-arginine biosynthesis; L-ornithine from N(2)-acetyl-L-ornithine (linear): step 1/1. In terms of biological role, catalyzes the hydrolysis of the amide bond of N(2)-acetylated L-amino acids. Cleaves the acetyl group from N-acetyl-L-ornithine to form L-ornithine, an intermediate in L-arginine biosynthesis pathway, and a branchpoint in the synthesis of polyamines. In Aliivibrio fischeri (strain ATCC 700601 / ES114) (Vibrio fischeri), this protein is Acetylornithine deacetylase.